The following is a 502-amino-acid chain: 4-hydroxy-3-methylbut-2-enyl diphosphate reductase, chloroplastic (502 aa).

Residues 1 to 48 constitute a chloroplast transit peptide; the sequence is MQVLPQTRVQGVPSGRNLSCSKAVGGTPLRALTRDVVRPARSVNVHVV. C140 contacts [4Fe-4S] cluster. Residue H170 participates in (2E)-4-hydroxy-3-methylbut-2-enyl diphosphate binding. C232 contributes to the [4Fe-4S] cluster binding site. H260 lines the (2E)-4-hydroxy-3-methylbut-2-enyl diphosphate pocket. E262 serves as the catalytic Proton donor. T325 is a (2E)-4-hydroxy-3-methylbut-2-enyl diphosphate binding site. C363 is a binding site for [4Fe-4S] cluster. Residues 398–400 and S461 each bind (2E)-4-hydroxy-3-methylbut-2-enyl diphosphate; that span reads SSN.

Belongs to the IspH family. As to quaternary structure, homodimer. Requires [4Fe-4S] cluster as cofactor.

Its subcellular location is the plastid. It is found in the chloroplast stroma. It carries out the reaction dimethylallyl diphosphate + 2 oxidized [2Fe-2S]-[ferredoxin] + H2O = (2E)-4-hydroxy-3-methylbut-2-enyl diphosphate + 2 reduced [2Fe-2S]-[ferredoxin] + 2 H(+). The enzyme catalyses isopentenyl diphosphate + 2 oxidized [2Fe-2S]-[ferredoxin] + H2O = (2E)-4-hydroxy-3-methylbut-2-enyl diphosphate + 2 reduced [2Fe-2S]-[ferredoxin] + 2 H(+). It participates in isoprenoid biosynthesis; dimethylallyl diphosphate biosynthesis; dimethylallyl diphosphate from (2E)-4-hydroxy-3-methylbutenyl diphosphate: step 1/1. Its pathway is isoprenoid biosynthesis; isopentenyl diphosphate biosynthesis via DXP pathway; isopentenyl diphosphate from 1-deoxy-D-xylulose 5-phosphate: step 6/6. Enzyme of the plastid non-mevalonate pathway for isoprenoid biosynthesis that converts 1-hydroxy-2-methyl-2-(E)-butenyl 4-diphosphate into isopentenyl diphosphate (IPP) and dimethylallyl diphosphate (DMAPP). The chain is 4-hydroxy-3-methylbut-2-enyl diphosphate reductase, chloroplastic from Botryococcus braunii (Green alga).